The sequence spans 500 residues: Lysine--tRNA ligase (500 aa).

Mg(2+) is bound by residues E410 and E417.

This sequence belongs to the class-II aminoacyl-tRNA synthetase family. Homodimer. The cofactor is Mg(2+).

It is found in the cytoplasm. It catalyses the reaction tRNA(Lys) + L-lysine + ATP = L-lysyl-tRNA(Lys) + AMP + diphosphate. The chain is Lysine--tRNA ligase from Shewanella sediminis (strain HAW-EB3).